The sequence spans 777 residues: Biotin sulfoxide reductase (777 aa).

Ser-148 is a Mo-bis(molybdopterin guanine dinucleotide) binding site.

It belongs to the prokaryotic molybdopterin-containing oxidoreductase family. Mo-bis(molybdopterin guanine dinucleotide) is required as a cofactor.

The enzyme catalyses [thioredoxin]-disulfide + L-methionine + H2O = L-methionine (S)-S-oxide + [thioredoxin]-dithiol. In terms of biological role, this enzyme may serve as a scavenger, allowing the cell to utilize biotin sulfoxide as a biotin source. It reduces a spontaneous oxidation product of biotin, D-biotin D-sulfoxide (BSO or BDS), back to biotin. Also exhibits methionine-(S)-sulfoxide (Met-S-SO) reductase activity, acting specifically on the (S) enantiomer in the free, but not the protein-bound form. It thus plays a role in assimilation of oxidized methionines. The protein is Biotin sulfoxide reductase (bisC) of Escherichia coli (strain K12).